The primary structure comprises 756 residues: MKKLLFTFLVSTGTIFFSCQRTYTQSKDYKNASLTIEERVDALLPKMSLEEKVAQMRIFHANIGVEAEGNGNLKLSDKVIEKLKLGIAGIKNPGEHMDPVAAAKFNNDLQKYIIENNRWGIPALFVTESYNGVDAAGSTRFGRPLTSAASFNPQLVNRIWDVVGREARLRGMHMCHSPEADLVRDPRFGRMSEAFGEDTYLTTQMVVNAINGVQGNYDGLGNGTHIGAVAKHFAGYGQVLGGSNFAAIEISPRTLIDEIYPPFEAAVKEAKTLGIMASHGDINGVASHGNPELLTGVLRDQWGFKGYVVSDSNDIARLFYFMNVAESPEEAAQMGLEAGIDIDLYAEDSYAYLPEMVKKNPNLEKLIDRSVRRVLRTKFILGLFDNPYIDIEEVKKGVRANSSLTLAKESDLESIILLKNENKILPLNKNKTTKIALLGPLVKDDTKSMFETVASKHISFVAEKGFHLTDEKGGAPKLLERDENAISKMVNMAKNSDLSILFLGGDEFTSKEAFFNNALGDRATIEPVGAQDELIEKIKALGKPVIVVLKHRRTLAINTISEQADAILDTWDLSEFGDESTARIIFGEVSPSGKLPVTVPRSIGQIPFHYSMKEINYKKGYLFMEDGPLYPFGYGLSYSNFEYSDIKKSNSEMTKDSEIEVSVTIKNTGNVKAKEVVQMYIKDVKGSVIRPDKELKGFEKISLNPGESKKVSFKITPEMLKFTGLKMEKVLESGEYTVMIGTSSVDYKKTSFQLKK.

The signal sequence occupies residues 1–18 (MKKLLFTFLVSTGTIFFS). The N-palmitoyl cysteine moiety is linked to residue Cys-19. The S-diacylglycerol cysteine moiety is linked to residue Cys-19.

It belongs to the glycosyl hydrolase 3 family.

The protein localises to the cell outer membrane. Glycoside hydrolase probably involved in ulvan degradation. Ulvan is the main polysaccharide component of the Ulvales (green seaweed) cell wall. It is composed of disaccharide building blocks comprising 3-sulfated rhamnose (Rha3S) linked to D-glucuronic acid (GlcA), L-iduronic acid (IduA), or D-xylose (Xyl). This is Putative beta-xylosidase from Formosa agariphila (strain DSM 15362 / KCTC 12365 / LMG 23005 / KMM 3901 / M-2Alg 35-1).